A 461-amino-acid polypeptide reads, in one-letter code: Asparagine--tRNA ligase (461 aa).

It belongs to the class-II aminoacyl-tRNA synthetase family. As to quaternary structure, homodimer.

It localises to the cytoplasm. It carries out the reaction tRNA(Asn) + L-asparagine + ATP = L-asparaginyl-tRNA(Asn) + AMP + diphosphate + H(+). The chain is Asparagine--tRNA ligase from Solibacter usitatus (strain Ellin6076).